The sequence spans 127 residues: Protein NEGATIVE REGULATOR OF RESISTANCE (127 aa).

Disordered stretches follow at residues 1-28 and 47-127; these read MDATTTAKRKRPAASDIADDAPTTVDEV and TRRL…RAPA. Over residues 112–127 the composition is skewed to low complexity; sequence PPSDAPATPRSARAPA.

This sequence belongs to the NPR1-interactor family. Interacts with NPR1/NH1. Interacts with NPR3/NH3.

The protein localises to the nucleus. In terms of biological role, acts as a negative regulator of disease resistance. Acts on basal resistance, age-related resistance and resistance mediated by the LRR receptor kinase XA21. Plants over-expressing NRR display enhanced susceptibility to the bacterial blight Xanthomonas oryzae pv. oryzae (Xoo). Binds to and represses NPR1/NH1-mediated transcriptional activation of LG2 in vitro. The chain is Protein NEGATIVE REGULATOR OF RESISTANCE from Oryza sativa subsp. japonica (Rice).